The following is a 173-amino-acid chain: DNA-directed RNA polymerase subunit delta (173 aa).

One can recognise an HTH HARE-type domain in the interval 14-81 (MALVEIAHEL…SDQTWGLRSW (68 aa)). Positions 110–173 (LDLDEFEEID…DYDDEEEEIK (64 aa)) are disordered.

The protein belongs to the RpoE family. As to quaternary structure, RNAP is composed of a core of 2 alpha, a beta and a beta' subunit. The core is associated with a delta subunit, and at least one of epsilon or omega. When a sigma factor is associated with the core the holoenzyme is formed, which can initiate transcription.

Its function is as follows. Participates in both the initiation and recycling phases of transcription. In the presence of the delta subunit, RNAP displays an increased specificity of transcription, a decreased affinity for nucleic acids, and an increased efficiency of RNA synthesis because of enhanced recycling. May function in sigma factor switching. It displaces RNA bound to RNA polymerase in a binary complex. The protein is DNA-directed RNA polymerase subunit delta of Bacillus subtilis (strain 168).